A 425-amino-acid chain; its full sequence is Nuclear hormone receptor family member nhr-13 (425 aa).

The nuclear receptor DNA-binding region spans 5-83 (PNSCEVCSSS…IGMKPLLVKS (79 aa)). 2 consecutive NR C4-type zinc fingers follow at residues 11–30 (CSSS…CKAC) and 46–71 (CIDQ…LKKC). Residues 108–148 (VKENSEEIQNDDDPQESDAEMENESTPGPSSEPSENVSAEN) are disordered. Acidic residues predominate over residues 113 to 130 (EEIQNDDDPQESDAEMEN). Residues 131–142 (ESTPGPSSEPSE) show a composition bias toward low complexity. The region spanning 147-414 (ENQETVTKFL…KSMISLTSFW (268 aa)) is the NR LBD domain.

This sequence belongs to the nuclear hormone receptor family. In terms of assembly, may interact with nuclear hormone receptor nhr-49.

It is found in the nucleus. In terms of biological role, orphan nuclear receptor. Involved in regulating fatty acid desaturase genes, acting in concert with nuclear hormone receptor nhr-49. This chain is Nuclear hormone receptor family member nhr-13 (nhr-13), found in Caenorhabditis elegans.